Here is a 337-residue protein sequence, read N- to C-terminus: Trace amine-associated receptor 5 (337 aa).

Topologically, residues 1–34 (MRAVFIQGAEEHPAAFCYQVNGSCPRTVHTLGIQ) are extracellular. Asn21 carries an N-linked (GlcNAc...) asparagine glycan. 2 disulfides stabilise this stretch: Cys24-Cys188 and Cys99-Cys192. The chain crosses the membrane as a helical span at residues 35–55 (LVIYLACAAGMLIIVLGNLFV). Topologically, residues 56 to 70 (AFAVSYFKALHTPTN) are cytoplasmic. The chain crosses the membrane as a helical span at residues 71–91 (FLLLSLALADMFLGLLVLPLS). Residues 92 to 109 (TIRSVESCWFFGDFLCRL) are Extracellular-facing. A helical membrane pass occupies residues 110–130 (HTYLDPLFCLTSIFHLCFISI). The Cytoplasmic segment spans residues 131–154 (DRHCAICDPLLYPSKFTVRVALRY). The helical transmembrane segment at 155–175 (ILAGWGVPAAYTSLFLYTDVV) threads the bilayer. The extracellular Loop 2 (ECL2) stretch occupies residues 176–189 (ETRLSQWLEEMPCV). Topologically, residues 176 to 204 (ETRLSQWLEEMPCVGSCQLLLNKFWGWLN) are extracellular. The chain crosses the membrane as a helical span at residues 205–225 (FPLFFVPCLIMISLYVKIFVV). At 226-253 (ATRQAQQITTLSKNLAGAAKHDRKAAKT) the chain is on the cytoplasmic side. Residues 254–274 (LGIAVGIYLLCWLPFTIDTMV) traverse the membrane as a helical segment. Residues 275–284 (DSLLHFITPP) are Extracellular-facing. A helical membrane pass occupies residues 285–307 (LVFDIFIWFAYFNSACNPIIYVF). At 308-337 (SYQWFRKALKLTLSQKVFSPQTRTVDLYQE) the chain is on the cytoplasmic side.

Belongs to the G-protein coupled receptor 1 family.

Its subcellular location is the cell membrane. Olfactory receptor specific for trimethylamine, a trace amine. Trimethylamine is a bacterial metabolite found in some animal odors. Trimethylamine-binding causes a conformation change that triggers signaling via G(s)-class of G alpha proteins (GNAL or GNAS). The polypeptide is Trace amine-associated receptor 5 (TAAR5) (Pan troglodytes (Chimpanzee)).